We begin with the raw amino-acid sequence, 245 residues long: TLC domain-containing protein 5 (245 aa).

Transmembrane regions (helical) follow at residues 1-21 (MAVGLCVQVLCSLGGWLSLYT), 38-58 (LVTFTHGVLSIGLSAYIGFID), 75-95 (VHVLCLTLGYFIFDLGWCIYF), 99-119 (GPLMLAHHTLSILGIIMALAL), 162-182 (FLFVALFTGVRIGVGAHLLFC), and 191-211 (WFVKVGGVAMYAVSWCFMVSI). One can recognise a TLC domain in the interval 29–204 (HRSCEWSCRL…VGGVAMYAVS (176 aa)).

It belongs to the TLCD5 family.

The protein localises to the membrane. The chain is TLC domain-containing protein 5 (Tlcd5) from Mus musculus (Mouse).